The following is a 969-amino-acid chain: Protein translocase subunit SecA (969 aa).

ATP is bound by residues Gln99, 117–121 (GEGKT), and Asp631.

It belongs to the SecA family. Monomer and homodimer. Part of the essential Sec protein translocation apparatus which comprises SecA, SecYEG and auxiliary proteins SecDF. Other proteins may also be involved.

The protein resides in the cell inner membrane. The protein localises to the cytoplasm. It carries out the reaction ATP + H2O + cellular proteinSide 1 = ADP + phosphate + cellular proteinSide 2.. Functionally, part of the Sec protein translocase complex. Interacts with the SecYEG preprotein conducting channel. Has a central role in coupling the hydrolysis of ATP to the transfer of proteins into and across the cell membrane, serving as an ATP-driven molecular motor driving the stepwise translocation of polypeptide chains across the membrane. The chain is Protein translocase subunit SecA from Chlamydia trachomatis serovar D (strain ATCC VR-885 / DSM 19411 / UW-3/Cx).